Here is a 176-residue protein sequence, read N- to C-terminus: Late lactation protein (176 aa).

The N-terminal stretch at 1-18 (MKVLFFTIALSLFSILHA) is a signal peptide. An intrachain disulfide couples cysteine 78 to cysteine 171.

It belongs to the calycin superfamily. Lipocalin family. As to expression, mammary gland. Secreted in milk.

Its subcellular location is the secreted. Probably serves a role in the transport of a small ligand released during the hydrolysis of milk fat. This chain is Late lactation protein, found in Trichosurus vulpecula (Brush-tailed possum).